Here is a 408-residue protein sequence, read N- to C-terminus: UDP-N-acetylglucosamine--N-acetylmuramyl-(pentapeptide) pyrophosphoryl-undecaprenol N-acetylglucosamine transferase (408 aa).

Residues 1–20 are disordered; sequence MNDTVKKPTGGRGDDPLPAG. Residues 41–43, N160, R197, S231, and Q327 each bind UDP-N-acetyl-alpha-D-glucosamine; that span reads TAG.

It belongs to the glycosyltransferase 28 family. MurG subfamily.

It is found in the cell membrane. The catalysed reaction is di-trans,octa-cis-undecaprenyl diphospho-N-acetyl-alpha-D-muramoyl-L-alanyl-D-glutamyl-meso-2,6-diaminopimeloyl-D-alanyl-D-alanine + UDP-N-acetyl-alpha-D-glucosamine = di-trans,octa-cis-undecaprenyl diphospho-[N-acetyl-alpha-D-glucosaminyl-(1-&gt;4)]-N-acetyl-alpha-D-muramoyl-L-alanyl-D-glutamyl-meso-2,6-diaminopimeloyl-D-alanyl-D-alanine + UDP + H(+). It functions in the pathway cell wall biogenesis; peptidoglycan biosynthesis. Cell wall formation. Catalyzes the transfer of a GlcNAc subunit on undecaprenyl-pyrophosphoryl-MurNAc-pentapeptide (lipid intermediate I) to form undecaprenyl-pyrophosphoryl-MurNAc-(pentapeptide)GlcNAc (lipid intermediate II). The sequence is that of UDP-N-acetylglucosamine--N-acetylmuramyl-(pentapeptide) pyrophosphoryl-undecaprenol N-acetylglucosamine transferase from Mycobacterium avium (strain 104).